Reading from the N-terminus, the 430-residue chain is Proteinase-activated receptor 1 (430 aa).

Residues 1-21 form the signal peptide; that stretch reads MGPRRLLIVALGLSLCGPLLS. Positions 22-41 are cleaved as a propeptide — removed for receptor activation; sequence SRVPMSQPESERTDATVNPR. Residues 42 to 107 are Extracellular-facing; that stretch reads SFFLRNPSEN…SGYLTSPWLT (66 aa). Residues Asn-67 and Asn-80 are each glycosylated (N-linked (GlcNAc...) asparagine). The helical transmembrane segment at 108–133 threads the bilayer; that stretch reads LFMPSVYTIVFIVSLPLNVLAIAVFV. Over 134 to 142 the chain is Cytoplasmic; it reads LRMKVKKPA. The helical transmembrane segment at 143–162 threads the bilayer; sequence VVYMLHLAMADVLFVSVLPF. Residues 163 to 181 are Extracellular-facing; sequence KISYYFSGTDWQFGSGMCR. Cys-180 and Cys-259 are disulfide-bonded. Residues 182-203 form a helical membrane-spanning segment; it reads FATAAFYGNMYASIMLMTVISI. At 204–223 the chain is on the cytoplasmic side; sequence DRFLAVVYPIQSLSWRTLGR. Residues 224–244 traverse the membrane as a helical segment; it reads ANFTCVVIWVMAIMGVVPLLL. At 245–273 the chain is on the extracellular side; that stretch reads KEQTTRVPGLNITTCHDVLSENLMQGFYS. An N-linked (GlcNAc...) asparagine glycan is attached at Asn-255. Residues 274–293 form a helical membrane-spanning segment; that stretch reads YYFSAFSAIFFLVPLIVSTV. Residues 294–316 lie on the Cytoplasmic side of the membrane; the sequence is CYTSIIRCLSSSAVANRSKKSRA. The chain crosses the membrane as a helical span at residues 317 to 339; sequence LFLSAAVFCIFIVCFGPTNVLLI. Residues 340–354 are Extracellular-facing; that stretch reads VHYLFLSDSPGTEAA. A helical membrane pass occupies residues 355–379; sequence YFAYLLCVCVSSVSCCIDPLIYYYA. Over 380 to 430 the chain is Cytoplasmic; that stretch reads SSECQRHLYSILCCKESSDPNSCNSTGQLMPSKMDTCSSHLNNSIYKKLLA. Ser-423 is modified (phosphoserine).

Belongs to the G-protein coupled receptor 1 family. Post-translationally, proteolytic cleavage by thrombin generates a new N-terminus that functions as a tethered ligand. Also proteolytically cleaved by cathepsin CTSG. In terms of processing, phosphorylated in the C-terminal tail; probably mediating desensitization prior to the uncoupling and internalization of the receptor.

It is found in the cell membrane. High affinity receptor that binds the activated thrombin, leading to calcium release from intracellular stores. The thrombin-activated receptor signaling pathway is mediated through PTX-insensitive G proteins, activation of phospholipase C resulting in the production of 1D-myo-inositol 1,4,5-trisphosphate (InsP3) which binds to InsP3 receptors causing calcium release from the stores. In astrocytes, the calcium released into the cytosol allows the Ca(2+)-dependent release of L-glutamate into the synaptic cleft through BEST1, that targets the neuronal postsynaptic GRIN2A/NMDAR receptor resulting in the synaptic plasticity regulation. May play a role in platelets activation and in vascular development. Mediates up-regulation of pro-inflammatory cytokines, such as MCP-1/CCL2 and IL6, triggered by coagulation factor Xa (F10) in cardiac fibroblasts and umbilical vein endothelial cells. The sequence is that of Proteinase-activated receptor 1 from Mus musculus (Mouse).